We begin with the raw amino-acid sequence, 416 residues long: Advanced glycosylation end product-specific receptor (416 aa).

The first 22 residues, methionine 1 to glycine 22, serve as a signal peptide directing secretion. In terms of domain architecture, Ig-like V-type spans aspartate 23–arginine 115. The Extracellular portion of the chain corresponds to aspartate 23–alanine 352. N-linked (GlcNAc...) asparagine glycosylation is found at asparagine 25 and asparagine 80. Intrachain disulfides connect cysteine 38–cysteine 98 and cysteine 143–cysteine 207. 2 Ig-like C2-type domains span residues proline 123 to histidine 220 and proline 238 to serine 327. The helical transmembrane segment at leucine 353 to tryptophan 373 threads the bilayer. Residues histidine 374 to proline 416 are Cytoplasmic-facing. A disordered region spans residues arginine 377–proline 416. Positions asparagine 389–alanine 408 are enriched in acidic residues.

As to quaternary structure, constitutive homodimer; disulfide-linked. Forms homooligomers. Interacts with S100A1 and APP. Interacts with S100B, S100A12 and S100A14. Interacts with TIRAP. Interacts with HMGB1. Interacts with LGP2; this interaction plays an important role in AGER-mediated pro-inflammatory responses and cytokine release. Interacts with double-strand break repair protein MRE11 which is a core component of the MRN complex; the interaction enhances MRE11 endonuclease activity and promotes DNA repair. Interacts with the MCM2-7 complex via interaction with complex member MCM2; the interaction is increased following DNA replication stress and stabilizes the MCM2-7 complex at replication forks. Phosphorylated on its cytoplasmic domain by PKCzeta/PRKCZ upon ligand binding. Phosphorylated by ATM following DNA damage. Post-translationally, targeted by the ubiquitin E3 ligase subunit FBXO10 to mediate its ubiquitination and degradation. As to expression, endothelial cells.

It is found in the cell membrane. The protein localises to the cell projection. The protein resides in the phagocytic cup. It localises to the early endosome. Its subcellular location is the nucleus. Its function is as follows. Cell surface pattern recognition receptor that senses endogenous stress signals with a broad ligand repertoire including advanced glycation end products, S100 proteins, high-mobility group box 1 protein/HMGB1, amyloid beta/APP oligomers, nucleic acids, histones, phospholipids and glycosaminoglycans. Advanced glycosylation end products are nonenzymatically glycosylated proteins which accumulate in vascular tissue in aging and at an accelerated rate in diabetes. These ligands accumulate at inflammatory sites during the pathogenesis of various diseases including diabetes, vascular complications, neurodegenerative disorders and cancers, and RAGE transduces their binding into pro-inflammatory responses. Upon ligand binding, uses TIRAP and MYD88 as adapters to transduce the signal ultimately leading to the induction of inflammatory cytokines IL6, IL8 and TNFalpha through activation of NF-kappa-B. Interaction with S100A12 on endothelium, mononuclear phagocytes, and lymphocytes triggers cellular activation, with generation of key pro-inflammatory mediators. Interaction with S100B after myocardial infarction may play a role in myocyte apoptosis by activating ERK1/2 and p53/TP53 signaling. Contributes to the translocation of amyloid-beta peptide (ABPP) across the cell membrane from the extracellular to the intracellular space in cortical neurons. ABPP-initiated RAGE signaling, especially stimulation of p38 mitogen-activated protein kinase (MAPK), has the capacity to drive a transport system delivering ABPP as a complex with RAGE to the intraneuronal space. Participates in endothelial albumin transcytosis together with HMGB1 through the RAGE/SRC/Caveolin-1 pathway, leading to endothelial hyperpermeability. Mediates the loading of HMGB1 in extracellular vesicles (EVs) that shuttle HMGB1 to hepatocytes by transferrin-mediated endocytosis and subsequently promote hepatocyte pyroptosis by activating the NLRP3 inflammasome. Binds to DNA and promotes extracellular hypomethylated DNA (CpG DNA) uptake by cells via the endosomal route to activate inflammatory responses. Mediates phagocytosis by non-professional phagocytes (NPP) and this is enhanced by binding to ligands including RNA, DNA, HMGB1 and histones. Promotes NPP-mediated phagocytosis of Saccharomyces cerevisiae spores by binding to RNA attached to the spore wall. Also promotes NPP-mediated phagocytosis of apoptotic cells. Following DNA damage, recruited to DNA double-strand break sites where it colocalizes with the MRN repair complex via interaction with double-strand break repair protein MRE11. Enhances the endonuclease activity of MRE11, promoting the end resection of damaged DNA. Promotes DNA damage repair in trophoblasts which enhances trophoblast invasion and contributes to placental development and maintenance. Protects cells from DNA replication stress by localizing to damaged replication forks where it stabilizes the MCM2-7 complex and promotes faithful progression of the replication fork. This Bos taurus (Bovine) protein is Advanced glycosylation end product-specific receptor (AGER).